We begin with the raw amino-acid sequence, 130 residues long: Protein NrdI (130 aa).

Belongs to the NrdI family.

Its function is as follows. Probably involved in ribonucleotide reductase function. The sequence is that of Protein NrdI from Bacillus velezensis (strain DSM 23117 / BGSC 10A6 / LMG 26770 / FZB42) (Bacillus amyloliquefaciens subsp. plantarum).